We begin with the raw amino-acid sequence, 353 residues long: Phospho-furanose lactonase (353 aa).

Positions 25, 27, 153, 186, and 214 each coordinate Zn(2+). Lys-153 carries the post-translational modification N6-carboxylysine. 244 to 245 lines the substrate pocket; that stretch reads KY. Asp-272 contacts Zn(2+). 275-278 serves as a coordination point for substrate; it reads RILY.

It belongs to the metallo-dependent hydrolases superfamily. Phosphotriesterase family. Requires Zn(2+) as cofactor.

It carries out the reaction a 1,4-lactone + H2O = a 4-hydroxyacid + H(+). The catalysed reaction is D-xylono-1,4-lactone 5-phosphate + H2O = 5-phospho-D-xylonate + H(+). It catalyses the reaction L-arabino-1,4-lactone 5-phosphate + H2O = 5-phospho-L-arabinonate + H(+). Its function is as follows. Catalyzes the hydrolysis of D-xylono-1,4-lactone-5-phosphate and L-arabino-1,4-lactone-5-phosphate. Also able to hydrolyze carboxy 1,4-lactones. This Mycoplasmopsis agalactiae (strain NCTC 10123 / CIP 59.7 / PG2) (Mycoplasma agalactiae) protein is Phospho-furanose lactonase.